An 847-amino-acid chain; its full sequence is Leucine--tRNA ligase (847 aa).

The 'HIGH' region signature appears at 41 to 51; the sequence is PYPSGRIHMGH. Residues 619-623 carry the 'KMSKS' region motif; the sequence is KMSKS. Lys-622 serves as a coordination point for ATP.

Belongs to the class-I aminoacyl-tRNA synthetase family.

The protein localises to the cytoplasm. The enzyme catalyses tRNA(Leu) + L-leucine + ATP = L-leucyl-tRNA(Leu) + AMP + diphosphate. This is Leucine--tRNA ligase from Cereibacter sphaeroides (strain KD131 / KCTC 12085) (Rhodobacter sphaeroides).